A 231-amino-acid polypeptide reads, in one-letter code: uncharacterized protein (231 aa).

This is an uncharacterized protein from Haemophilus influenzae (strain ATCC 51907 / DSM 11121 / KW20 / Rd).